The following is a 211-amino-acid chain: Chaperone protein TorD (211 aa).

This sequence belongs to the TorD/DmsD family. TorD subfamily.

It is found in the cytoplasm. Functionally, involved in the biogenesis of TorA. Acts on TorA before the insertion of the molybdenum cofactor and, as a result, probably favors a conformation of the apoenzyme that is competent for acquiring the cofactor. The protein is Chaperone protein TorD of Shewanella loihica (strain ATCC BAA-1088 / PV-4).